A 278-amino-acid chain; its full sequence is Elongation factor Ts (278 aa).

The interval Thr-79–Val-82 is involved in Mg(2+) ion dislocation from EF-Tu.

The protein belongs to the EF-Ts family.

The protein localises to the cytoplasm. In terms of biological role, associates with the EF-Tu.GDP complex and induces the exchange of GDP to GTP. It remains bound to the aminoacyl-tRNA.EF-Tu.GTP complex up to the GTP hydrolysis stage on the ribosome. The sequence is that of Elongation factor Ts from Borrelia recurrentis (strain A1).